We begin with the raw amino-acid sequence, 264 residues long: Exosome complex component Rrp4 (264 aa).

The 73-residue stretch at 65–137 folds into the S1 motif domain; it reads GDNVLGKIVD…EVNNIELTTK (73 aa). The region spanning 147 to 206 is the KH domain; that stretch reads RGGQIIKITSSKVPRVIGKGGSMINMIKKLTQSRIIVGQNGWIWISSKNPELEKLAIEAI. Over residues 244–258 the composition is skewed to acidic residues; it reads SLEEETQEETVMEND. The interval 244–264 is disordered; sequence SLEEETQEETVMENDVEARGP.

This sequence belongs to the RRP4 family. Component of the archaeal exosome complex. Forms a trimer of Rrp4 and/or Csl4 subunits. The trimer associates with a hexameric ring-like arrangement composed of 3 Rrp41-Rrp42 heterodimers.

The protein resides in the cytoplasm. Non-catalytic component of the exosome, which is a complex involved in RNA degradation. Increases the RNA binding and the efficiency of RNA degradation. Confers strong poly(A) specificity to the exosome. The sequence is that of Exosome complex component Rrp4 from Pyrococcus furiosus (strain ATCC 43587 / DSM 3638 / JCM 8422 / Vc1).